Consider the following 419-residue polypeptide: MKRLLILSLLLEAVCGNENFVGHQVLRISAADEAQVQKVKELEDLEHLQLDFWRDAARAGIPIDVRVPFPSIQSVKAFLEYHGISYEIMIEDVQLLLDEEKQQMSAFQARALSTDSFNYATYHTLDEIYEFMDLLVAEHPQLVSKIQIGNTFEGRPIHVLKFSTGGTNRPAIWIDTGIHSREWVTQASGVWFAKKITKDYGQDPTFTAVLDNMDIFLEIVTNPDGFAYTHKTNRMWRKTRSHTQGSLCVGVDPNRNWDAGFGMAGASSNPCSETYRGKFPNSEVEVKSIVDFVTSHGNIKAFISIHSYSQLLLYPYGYTSEPAPDQAELDQLAKSAVTALTSLHGTKFKYGSIIDTIYQASGSTIDWTYSQGIKYSFTFELRDTGLRGFLLPASQIIPTAEETWLALLTIMDHTVKHPY.

Residues 1-16 (MKRLLILSLLLEAVCG) form the signal peptide. The propeptide at 17-110 (NENFVGHQVL…KQQMSAFQAR (94 aa)) is activation peptide. Residues 121–414 (TYHTLDEIYE…LALLTIMDHT (294 aa)) enclose the Peptidase M14 domain. Zn(2+) contacts are provided by H179 and E182. Substrate-binding positions include 179–182 (HSRE), R237, and 254–255 (NR). An intrachain disulfide couples C248 to C271. H306 contributes to the Zn(2+) binding site. Substrate contacts are provided by residues 307 to 308 (SY) and Y358. E380 serves as the catalytic Proton donor/acceptor.

The protein belongs to the peptidase M14 family. In terms of assembly, monomer. May form a complex with proelastase 2. Requires Zn(2+) as cofactor.

It localises to the secreted. It catalyses the reaction Release of a C-terminal amino acid, but little or no action with -Asp, -Glu, -Arg, -Lys or -Pro.. The catalysed reaction is leukotriene C4 + H2O = leukotriene F4 + glycine. Functionally, carboxypeptidase that catalyzes the release of a C-terminal amino acid, but has little or no action with -Asp, -Glu, -Arg, -Lys or -Pro. Catalyzes the conversion of leukotriene C4 to leukotriene F4 via the hydrolysis of an amide bond. The polypeptide is Carboxypeptidase A1 (Rattus norvegicus (Rat)).